We begin with the raw amino-acid sequence, 192 residues long: Peptidyl-tRNA hydrolase (192 aa).

TRNA is bound at residue histidine 17. Histidine 22 (proton acceptor) is an active-site residue. Positions 68, 70, and 116 each coordinate tRNA.

It belongs to the PTH family. In terms of assembly, monomer.

The protein resides in the cytoplasm. The enzyme catalyses an N-acyl-L-alpha-aminoacyl-tRNA + H2O = an N-acyl-L-amino acid + a tRNA + H(+). Functionally, hydrolyzes ribosome-free peptidyl-tRNAs (with 1 or more amino acids incorporated), which drop off the ribosome during protein synthesis, or as a result of ribosome stalling. In terms of biological role, catalyzes the release of premature peptidyl moieties from peptidyl-tRNA molecules trapped in stalled 50S ribosomal subunits, and thus maintains levels of free tRNAs and 50S ribosomes. This Stenotrophomonas maltophilia (strain R551-3) protein is Peptidyl-tRNA hydrolase.